The following is a 151-amino-acid chain: Ribosomal RNA large subunit methyltransferase H (151 aa).

S-adenosyl-L-methionine contacts are provided by residues leucine 73, glycine 100, and 119–124 (LSDLTM).

The protein belongs to the RNA methyltransferase RlmH family. Homodimer.

It is found in the cytoplasm. It catalyses the reaction pseudouridine(1915) in 23S rRNA + S-adenosyl-L-methionine = N(3)-methylpseudouridine(1915) in 23S rRNA + S-adenosyl-L-homocysteine + H(+). Specifically methylates the pseudouridine at position 1915 (m3Psi1915) in 23S rRNA. The polypeptide is Ribosomal RNA large subunit methyltransferase H (Aliarcobacter butzleri (strain RM4018) (Arcobacter butzleri)).